The chain runs to 407 residues: Na(+)-translocating NADH-quinone reductase subunit F (407 aa).

Residues isoleucine 3 to phenylalanine 23 traverse the membrane as a helical segment. A 2Fe-2S ferredoxin-type domain is found at glycine 32–valine 126. [2Fe-2S] cluster is bound by residues cysteine 69, cysteine 75, cysteine 78, and cysteine 110. An FAD-binding FR-type domain is found at valine 129–lysine 269.

The protein belongs to the NqrF family. As to quaternary structure, composed of six subunits; NqrA, NqrB, NqrC, NqrD, NqrE and NqrF. [2Fe-2S] cluster is required as a cofactor. Requires FAD as cofactor.

It is found in the cell inner membrane. It carries out the reaction a ubiquinone + n Na(+)(in) + NADH + H(+) = a ubiquinol + n Na(+)(out) + NAD(+). In terms of biological role, NQR complex catalyzes the reduction of ubiquinone-1 to ubiquinol by two successive reactions, coupled with the transport of Na(+) ions from the cytoplasm to the periplasm. The first step is catalyzed by NqrF, which accepts electrons from NADH and reduces ubiquinone-1 to ubisemiquinone by a one-electron transfer pathway. The protein is Na(+)-translocating NADH-quinone reductase subunit F of Histophilus somni (strain 129Pt) (Haemophilus somnus).